The chain runs to 570 residues: Probable metalloreductase AIM14 (570 aa).

The Extracellular segment spans residues Met-1–Asn-20. Residues Ile-21–Leu-41 traverse the membrane as a helical segment. At Arg-42–Pro-69 the chain is on the cytoplasmic side. Residues Ala-70–Leu-90 form a helical membrane-spanning segment. At Thr-91–Arg-141 the chain is on the extracellular side. The 119-residue stretch at Leu-101–Leu-219 folds into the Ferric oxidoreductase domain. Residues Ile-142–Asp-162 traverse the membrane as a helical segment. The Cytoplasmic segment spans residues Asn-163 to Asn-176. A helical transmembrane segment spans residues Phe-177 to Met-197. Residues Arg-198–Asn-373 lie on the Extracellular side of the membrane. One can recognise an FAD-binding FR-type domain in the interval Phe-250 to Pro-388. A helical transmembrane segment spans residues Ile-374–Phe-394. Topologically, residues Asn-395–Leu-570 are cytoplasmic. The span at Ile-480–Asn-505 shows a compositional bias: polar residues. Residues Ile-480–Ile-509 are disordered.

Belongs to the ferric reductase (FRE) family. AIM14 subfamily. As to quaternary structure, interacts with ribosomes.

The protein localises to the membrane. Its function is as follows. Probable cell surface metalloreductase. May be involved in iron or copper homeostasis. This Saccharomyces cerevisiae (strain ATCC 204508 / S288c) (Baker's yeast) protein is Probable metalloreductase AIM14 (AIM14).